Consider the following 109-residue polypeptide: Parvalbumin beta-1 (109 aa).

The residue at position 2 (S2) is an N-acetylserine. EF-hand domains lie at 39 to 74 and 78 to 109; these read KSHE…FGAG and LTAA…LVKA. Residues D52, D54, S56, F58, E60, E63, D91, D93, D95, M97, and E102 each coordinate Ca(2+).

Belongs to the parvalbumin family.

In muscle, parvalbumin is thought to be involved in relaxation after contraction. It binds two calcium ions. In Gadus chalcogrammus (Alaska pollock), this protein is Parvalbumin beta-1.